Consider the following 238-residue polypeptide: Leucine-rich repeat-containing protein 57 (238 aa).

LRR repeat units follow at residues 39–60, 62–84, 85–106, 108–129, 131–152, 153–175, 176–196, and 201–221; these read NLRT…MGKF, LLKS…CKLK, KLET…FVQL, ALKT…LFKL, NLDV…VSGL, QAIE…SHCP, RLKV…PPSI, and QISL…RDLE.

The protein is Leucine-rich repeat-containing protein 57 (lrrc57) of Xenopus laevis (African clawed frog).